Reading from the N-terminus, the 242-residue chain is Small ribosomal subunit protein uS3 (242 aa).

Positions 39-110 (IRKFIHKKYG…QVRINVVEVE (72 aa)) constitute a KH type-2 domain. The interval 221-242 (GASPRRRASRRPQQFEDRSNEG) is disordered. Basic and acidic residues predominate over residues 233–242 (QQFEDRSNEG).

Belongs to the universal ribosomal protein uS3 family. In terms of assembly, part of the 30S ribosomal subunit. Forms a tight complex with proteins S10 and S14.

In terms of biological role, binds the lower part of the 30S subunit head. Binds mRNA in the 70S ribosome, positioning it for translation. The chain is Small ribosomal subunit protein uS3 from Parasynechococcus marenigrum (strain WH8102).